We begin with the raw amino-acid sequence, 150 residues long: uncharacterized protein (150 aa).

The HTH marR-type domain maps to 1 to 133 (MNDILREIGM…ISALLHRVRK (133 aa)). A DNA-binding region (H-T-H motif) is located at residues 47 to 70 (QEKLAEMIKVDRTTAARAIKKLEM).

This is an uncharacterized protein from Bacillus subtilis (strain 168).